Here is a 118-residue protein sequence, read N- to C-terminus: UPF0148 protein M1627_1409 (118 aa).

The protein belongs to the UPF0148 family.

The protein is UPF0148 protein M1627_1409 of Saccharolobus islandicus (strain M.16.27) (Sulfolobus islandicus).